Reading from the N-terminus, the 104-residue chain is Antitoxin HigA-2 (104 aa).

The region spanning 45–98 is the HTH cro/C1-type domain; it reads IVSIREQFNMSRGVFARLLHTSSRTLENWEQGRSVPNGQAVTLLKLVQRHPETL. The segment at residues 56–75 is a DNA-binding region (H-T-H motif); it reads RGVFARLLHTSSRTLENWEQ.

Antitoxin component of a type II toxin-antitoxin (TA) system that counteracts the effect of the HigB-2 toxin. Binds to its own promoter and regulates transcription of the higB-2/higA-2 operon. This chain is Antitoxin HigA-2 (higA-2), found in Vibrio cholerae serotype O1 (strain ATCC 39315 / El Tor Inaba N16961).